Here is a 118-residue protein sequence, read N- to C-terminus: Myotrophin (118 aa).

ANK repeat units follow at residues 1 to 30, 34 to 65, and 67 to 98; these read MGDKEFVWAIKNGDLDAVKEFVLGGEDVNR, GGRKPMHYAADCGQDEVLEFLLSKGANINAAD, and HGITPLLSACYEGHRKCVELLLSKGADKTVKG.

This sequence belongs to the myotrophin family.

It is found in the cytoplasm. The protein resides in the nucleus. Its subcellular location is the perinuclear region. Regulates NF-kappa-B transcription factor activity. Promotes growth of cardiomyocytes, but not cardiomyocyte proliferation. Promotes cardiac muscle hypertrophy. Plays a role in the regulation of the growth of actin filaments. Inhibits the activity of the F-actin-capping protein complex. The chain is Myotrophin (mtpn) from Xenopus tropicalis (Western clawed frog).